The chain runs to 408 residues: Dual-specificity RNA methyltransferase RlmN (408 aa).

Glu-93 (proton acceptor) is an active-site residue. Positions 99 to 379 (ETNRGTLCIS…TTTRKTRGDD (281 aa)) constitute a Radical SAM core domain. The cysteines at positions 106 and 384 are disulfide-linked. [4Fe-4S] cluster-binding residues include Cys-113, Cys-117, and Cys-120. The tract at residues 152–196 (SPAGSKDGDGGPDHASRATKLDHRAADAKGVQSDSWRSSDPEEDH) is disordered. The span at 157-178 (KDGDGGPDHASRATKLDHRAAD) shows a compositional bias: basic and acidic residues. S-adenosyl-L-methionine contacts are provided by residues 210 to 211 (GE), Ser-242, 264 to 266 (SLH), and Asn-341. Residue Cys-384 is the S-methylcysteine intermediate of the active site.

It belongs to the radical SAM superfamily. RlmN family. Requires [4Fe-4S] cluster as cofactor.

The protein resides in the cytoplasm. The catalysed reaction is adenosine(2503) in 23S rRNA + 2 reduced [2Fe-2S]-[ferredoxin] + 2 S-adenosyl-L-methionine = 2-methyladenosine(2503) in 23S rRNA + 5'-deoxyadenosine + L-methionine + 2 oxidized [2Fe-2S]-[ferredoxin] + S-adenosyl-L-homocysteine. The enzyme catalyses adenosine(37) in tRNA + 2 reduced [2Fe-2S]-[ferredoxin] + 2 S-adenosyl-L-methionine = 2-methyladenosine(37) in tRNA + 5'-deoxyadenosine + L-methionine + 2 oxidized [2Fe-2S]-[ferredoxin] + S-adenosyl-L-homocysteine. Specifically methylates position 2 of adenine 2503 in 23S rRNA and position 2 of adenine 37 in tRNAs. m2A2503 modification seems to play a crucial role in the proofreading step occurring at the peptidyl transferase center and thus would serve to optimize ribosomal fidelity. The sequence is that of Dual-specificity RNA methyltransferase RlmN from Aromatoleum aromaticum (strain DSM 19018 / LMG 30748 / EbN1) (Azoarcus sp. (strain EbN1)).